The sequence spans 242 residues: Zinc-finger homeodomain protein 13 (242 aa).

The segment at Tyr64–Glu111 adopts a ZF-HD dimerization-type; degenerate zinc-finger fold. A disordered region spans residues Gly144–Lys166. The span at Glu155 to Lys166 shows a compositional bias: basic and acidic residues. The segment at residues Val179–Ile238 is a DNA-binding region (homeobox).

Homo- and heterodimer with other ZFHD proteins. Interacts with MIF1, MIF2 and MIF3; these interactions prevent nuclear localization and DNA-binding to inhibit transcription regulation activity. Binds to ZHD11. As to expression, mostly expressed in flowers.

The protein resides in the nucleus. Its function is as follows. Putative transcription factor. The chain is Zinc-finger homeodomain protein 13 (ZHD13) from Arabidopsis thaliana (Mouse-ear cress).